The chain runs to 539 residues: MKLQAVMETLQRQQRARLQQELEARQLQQDSSEGRTPPSAGYPGNGSDEAEPEALKIQRAQAAALAAMRAAAAGLSQQPSPAASEEEDGESMASDEEDEKERDGESERYQDMASEEEDLKGKWDEDDFEDEGEDEYEDMEEGIGVNEAGRVGKGSTLPPKHSSQQAFPSQRSQGAERAGLPLSGHPQLQDHGDWTYEEQFKQLYELDGDPKRKEFLDDLFSFMQKRGTPVNRIPIMAKQVLDLYMLYVLVTEKGGLVEVINKKLWREITKGLNLPTSITSAAFTLRTQYMKYLYPYECEKRGLSNPNELQAAIDSNRREGRRQSFGGTLFTYSPSGAPSMLSSPKLQVSGLSLGGAALNGSTLSSMQKIKKEEDSPISLAMPPRIPVTLAGHSMVAAQVAAQAAALEQLREKLESGEPPEKKMALGSEEQQRIIQRTIQHNLLAMTAQLPMNIRINSQAEGRQDSAVNLTTNGTNSISMSVELNGIVYTGVLFAQPPTSASGTSKGSSNRTGSIGGGSSNSQAAPPSTPSAPNSNNPSP.

Residues 1 to 190 (MKLQAVMETL…PLSGHPQLQD (190 aa)) form a disordered region. Over residues 55–73 (LKIQRAQAAALAAMRAAAA) the composition is skewed to low complexity. Over residues 84–100 (SEEEDGESMASDEEDEK) the composition is skewed to acidic residues. Residues 101–110 (ERDGESERYQ) show a composition bias toward basic and acidic residues. Over residues 113–141 (ASEEEDLKGKWDEDDFEDEGEDEYEDMEE) the composition is skewed to acidic residues. Residues 161-173 (HSSQQAFPSQRSQ) show a composition bias toward polar residues. The ARID domain occupies 209–301 (DPKRKEFLDD…YLYPYECEKR (93 aa)). The REKLES domain maps to 404–499 (AALEQLREKL…GVLFAQPPTS (96 aa)). The segment at 405–448 (ALEQLREKLESGEPPEKKMALGSEEQQRIIQRTIQHNLLAMTAQ) is important for nuclear localization. The segment at 450–471 (PMNIRINSQAEGRQDSAVNLTT) is homodimerization. The segment at 495–502 (QPPTSASG) is important for cytoplasmic localization. Polar residues predominate over residues 497 to 512 (PTSASGTSKGSSNRTG). Residues 497-539 (PTSASGTSKGSSNRTGSIGGGSSNSQAAPPSTPSAPNSNNPSP) form a disordered region. Low complexity predominate over residues 519–539 (SNSQAAPPSTPSAPNSNNPSP).

As to quaternary structure, homodimer.

The protein localises to the nucleus. It is found in the cytoplasm. Transcription factor required for smad1 and smad2-mediated responses to TGFbeta during mesoderm induction. In Xenopus laevis (African clawed frog), this protein is AT-rich interactive domain-containing protein 3A (arid3a).